A 675-amino-acid polypeptide reads, in one-letter code: Potassium-transporting ATPase ATP-binding subunit 2 (675 aa).

4 helical membrane passes run 34 to 54 (IMFVVEVGMVLTLILICFPDI), 65 to 85 (LITIFIILLITILFANFSEAF), 216 to 236 (IALFTLLTTLTIIFLVVIVTL), and 245 to 265 (LILPIAMLIALTVCLIPTTIG). Residue D304 is the 4-aspartylphosphate intermediate of the active site. ATP is bound by residues D341, E345, 372-379 (FTAETRMS), and K390. D513 and D517 together coordinate Mg(2+). The next 3 helical transmembrane spans lie at 569–591 (ALTTFSLANDVAKYFAILPALMM), 611–631 (AIISALIFNALIIVALIPIAM), and 644–664 (IFINNMLIYGLGGLIVPFLGI).

The protein belongs to the cation transport ATPase (P-type) (TC 3.A.3) family. Type IA subfamily. The system is composed of three essential subunits: KdpA, KdpB and KdpC.

The protein localises to the cell membrane. The catalysed reaction is K(+)(out) + ATP + H2O = K(+)(in) + ADP + phosphate + H(+). In terms of biological role, part of the high-affinity ATP-driven potassium transport (or Kdp) system, which catalyzes the hydrolysis of ATP coupled with the electrogenic transport of potassium into the cytoplasm. This subunit is responsible for energy coupling to the transport system and for the release of the potassium ions to the cytoplasm. This chain is Potassium-transporting ATPase ATP-binding subunit 2, found in Staphylococcus aureus (strain Mu50 / ATCC 700699).